The primary structure comprises 353 residues: Photosystem II D2 protein (353 aa).

T2 carries the N-acetylthreonine modification. T2 carries the phosphothreonine modification. The helical transmembrane segment at 41–61 threads the bilayer; it reads CAYFALGGWFTGTTFVTSWYT. Residue H118 participates in chlorophyll a binding. The chain crosses the membrane as a helical span at residues 125-141; the sequence is GFMLRQFELARSVQLRP. Residues Q130 and N143 each coordinate pheophytin a. A helical transmembrane segment spans residues 153–166; it reads VFVSVFLIYPLGQS. Chlorophyll a is bound at residue H198. Residues 208–228 form a helical membrane-spanning segment; sequence AALLCAIHGATVENTLFEDGD. Residues H215 and F262 each contribute to the a plastoquinone site. Residue H215 participates in Fe cation binding. H269 provides a ligand contact to Fe cation. A helical transmembrane segment spans residues 279-295; sequence GLWMSAIGVVGLALNLR.

It belongs to the reaction center PufL/M/PsbA/D family. In terms of assembly, PSII is composed of 1 copy each of membrane proteins PsbA, PsbB, PsbC, PsbD, PsbE, PsbF, PsbH, PsbI, PsbJ, PsbK, PsbL, PsbM, PsbT, PsbX, PsbY, PsbZ, Psb30/Ycf12, at least 3 peripheral proteins of the oxygen-evolving complex and a large number of cofactors. It forms dimeric complexes. The D1/D2 heterodimer binds P680, chlorophylls that are the primary electron donor of PSII, and subsequent electron acceptors. It shares a non-heme iron and each subunit binds pheophytin, quinone, additional chlorophylls, carotenoids and lipids. There is also a Cl(-1) ion associated with D1 and D2, which is required for oxygen evolution. The PSII complex binds additional chlorophylls, carotenoids and specific lipids. is required as a cofactor.

The protein resides in the plastid. It is found in the chloroplast thylakoid membrane. It catalyses the reaction 2 a plastoquinone + 4 hnu + 2 H2O = 2 a plastoquinol + O2. Functionally, photosystem II (PSII) is a light-driven water:plastoquinone oxidoreductase that uses light energy to abstract electrons from H(2)O, generating O(2) and a proton gradient subsequently used for ATP formation. It consists of a core antenna complex that captures photons, and an electron transfer chain that converts photonic excitation into a charge separation. The D1/D2 (PsbA/PsbD) reaction center heterodimer binds P680, the primary electron donor of PSII as well as several subsequent electron acceptors. D2 is needed for assembly of a stable PSII complex. The chain is Photosystem II D2 protein from Cycas taitungensis (Prince sago).